Consider the following 302-residue polypeptide: 33 kDa chaperonin (302 aa).

2 disulfides stabilise this stretch: Cys255–Cys257 and Cys288–Cys291.

Belongs to the HSP33 family. In terms of processing, under oxidizing conditions two disulfide bonds are formed involving the reactive cysteines. Under reducing conditions zinc is bound to the reactive cysteines and the protein is inactive.

The protein localises to the cytoplasm. Redox regulated molecular chaperone. Protects both thermally unfolding and oxidatively damaged proteins from irreversible aggregation. Plays an important role in the bacterial defense system toward oxidative stress. The sequence is that of 33 kDa chaperonin from Caulobacter vibrioides (strain ATCC 19089 / CIP 103742 / CB 15) (Caulobacter crescentus).